The following is a 248-amino-acid chain: 3-deoxy-manno-octulosonate cytidylyltransferase (248 aa).

It belongs to the KdsB family.

The protein localises to the cytoplasm. The catalysed reaction is 3-deoxy-alpha-D-manno-oct-2-ulosonate + CTP = CMP-3-deoxy-beta-D-manno-octulosonate + diphosphate. The protein operates within nucleotide-sugar biosynthesis; CMP-3-deoxy-D-manno-octulosonate biosynthesis; CMP-3-deoxy-D-manno-octulosonate from 3-deoxy-D-manno-octulosonate and CTP: step 1/1. It participates in bacterial outer membrane biogenesis; lipopolysaccharide biosynthesis. Its function is as follows. Activates KDO (a required 8-carbon sugar) for incorporation into bacterial lipopolysaccharide in Gram-negative bacteria. This is 3-deoxy-manno-octulosonate cytidylyltransferase from Enterobacter sp. (strain 638).